Consider the following 477-residue polypeptide: Probable cytosol aminopeptidase (477 aa).

Mn(2+) is bound by residues K245 and D250. K257 is a catalytic residue. The Mn(2+) site is built by D268, D327, and E329. The active site involves R331.

Belongs to the peptidase M17 family. Requires Mn(2+) as cofactor.

It localises to the cytoplasm. The catalysed reaction is Release of an N-terminal amino acid, Xaa-|-Yaa-, in which Xaa is preferably Leu, but may be other amino acids including Pro although not Arg or Lys, and Yaa may be Pro. Amino acid amides and methyl esters are also readily hydrolyzed, but rates on arylamides are exceedingly low.. It catalyses the reaction Release of an N-terminal amino acid, preferentially leucine, but not glutamic or aspartic acids.. Presumably involved in the processing and regular turnover of intracellular proteins. Catalyzes the removal of unsubstituted N-terminal amino acids from various peptides. In Exiguobacterium sibiricum (strain DSM 17290 / CCUG 55495 / CIP 109462 / JCM 13490 / 255-15), this protein is Probable cytosol aminopeptidase.